We begin with the raw amino-acid sequence, 571 residues long: uncharacterized protein (571 aa).

5 helical membrane passes run V10–G29, V36–F55, W65–L87, A96–F118, and A166–L188. One can recognise an RCK C-terminal domain in the interval T294–F378. 6 helical membrane passes run L388–V406, V411–S433, L446–A465, L480–L502, L509–L531, and V546–A568.

This sequence belongs to the AAE transporter (TC 2.A.81) family.

The protein resides in the cell membrane. This is an uncharacterized protein from Bordetella parapertussis (strain 12822 / ATCC BAA-587 / NCTC 13253).